The primary structure comprises 90 residues: Putative septation protein SpoVG (90 aa).

It belongs to the SpoVG family.

Functionally, could be involved in septation. The chain is Putative septation protein SpoVG from Clostridium perfringens (strain SM101 / Type A).